Reading from the N-terminus, the 515-residue chain is Mucin-like protein Glc1.8b (515 aa).

Positions Met1 to Ser20 are cleaved as a signal peptide. The Extracellular segment spans residues His21–Pro467. Asn24, Asn45, Asn51, Asn60, Asn85, Asn93, Asn102, Asn123, Asn129, Asn138, Asn180, Asn201, Asn207, Asn216, Asn258, Asn279, Asn285, Asn294, Asn319, Asn327, Asn336, Asn357, Asn363, Asn372, Asn397, Asn405, Asn413, Asn434, and Asn441 each carry an N-linked (GlcNAc...) asparagine; by host glycan. The disordered stretch occupies residues Ser80–Leu114. A compositionally biased stretch (polar residues) spans Ile86–Thr104. Residues Ser314 to Thr358 form a disordered region. Residues Ile320–Thr338 are compositionally biased toward polar residues. Positions Arg393–Asn413 are disordered. The chain crosses the membrane as a helical span at residues Tyr468–Phe488. Over Arg489–Glu515 the chain is Cytoplasmic.

Belongs to the polydnaviridae Glc1.8 protein family.

Its subcellular location is the host membrane. Its function is as follows. Involved in suppression of the insect cellular immune response. Inhibits host hemocyte adhesion and phagocytosis. The sequence is that of Mucin-like protein Glc1.8b (O16) from Microplitis demolitor (Parasitoid wasp).